A 188-amino-acid chain; its full sequence is ATP synthase subunit p18, mitochondrial (188 aa).

A mitochondrion-targeting transit peptide spans 1–18; it reads MMRRVYSPVFCSVAAARF. PPR repeat units follow at residues 36-70, 75-109, and 116-146; these read TNTA…PPDI, ATLQ…EMQH, and NEES…METE.

In terms of assembly, F-type ATPases have 2 components, F(1) - the catalytic core - and F(o) - the membrane proton channel. F(1) has five subunits: alpha(3), beta(3), gamma(1), delta(1), epsilon(1), plus the additional subunit P18 (Tb427.05.1710) that is not present in F(1)F(o) ATP synthase from metazoa. Subunit P18 (Tb927.5.1710) interacts with the alpha subunit with a 1:1 stoichiometry; the interaction is direct. Subunit gamma is part of the central stalk. F(o) has three main subunits: a, b and c. The trypanosomal ATPase complex contains additional subunits that are not present in the F(1)F(o) ATP synthase from metazoa.

The protein localises to the mitochondrion. It localises to the mitochondrion inner membrane. Its function is as follows. Mitochondrial membrane ATP synthase (F(1)F(o) ATP synthase) produces ATP from ADP in the presence of a proton gradient across the membrane which is generated by electron transport complexes of the respiratory chain. F-type ATPases consist of two structural domains, F(1) - containing the extramembraneous catalytic core, and F(o) - containing the membrane proton channel, linked together by a central stalk and a peripheral stalk. During catalysis, ATP synthesis in the catalytic domain of F(1) is coupled via a rotary mechanism of the central stalk subunits to proton translocation. Subunits alpha and beta form the catalytic core in F(1). Rotation of the central stalk against the surrounding alpha(3)beta(3) subunits leads to hydrolysis of ATP in three separate catalytic sites on the beta subunits. Contrary to the procyclic, insect form that requires F(1)F(o) ATP synthase for ATP synthesis, the bloodstream form relies on ATP hydrolysis by F(1)F(o) ATP synthase to maintain its mitochondrial membrane potential. In Trypanosoma brucei brucei, this protein is ATP synthase subunit p18, mitochondrial.